A 308-amino-acid chain; its full sequence is Aspartate carbamoyltransferase catalytic subunit (308 aa).

Positions 55 and 56 each coordinate carbamoyl phosphate. Position 83 (lysine 83) interacts with L-aspartate. Arginine 105, histidine 133, and glutamine 136 together coordinate carbamoyl phosphate. The L-aspartate site is built by arginine 166 and arginine 220. Carbamoyl phosphate is bound by residues glycine 261 and proline 262.

Belongs to the aspartate/ornithine carbamoyltransferase superfamily. ATCase family. As to quaternary structure, heterododecamer (2C3:3R2) of six catalytic PyrB chains organized as two trimers (C3), and six regulatory PyrI chains organized as three dimers (R2).

It carries out the reaction carbamoyl phosphate + L-aspartate = N-carbamoyl-L-aspartate + phosphate + H(+). Its pathway is pyrimidine metabolism; UMP biosynthesis via de novo pathway; (S)-dihydroorotate from bicarbonate: step 2/3. In terms of biological role, catalyzes the condensation of carbamoyl phosphate and aspartate to form carbamoyl aspartate and inorganic phosphate, the committed step in the de novo pyrimidine nucleotide biosynthesis pathway. The protein is Aspartate carbamoyltransferase catalytic subunit of Chlorobaculum tepidum (strain ATCC 49652 / DSM 12025 / NBRC 103806 / TLS) (Chlorobium tepidum).